A 91-amino-acid polypeptide reads, in one-letter code: Small ribosomal subunit protein bS20 (91 aa).

The interval 1–23 (MANTPSAKKRAKQAEKRRSHNAS) is disordered. The segment covering 7–20 (AKKRAKQAEKRRSH) has biased composition (basic residues).

It belongs to the bacterial ribosomal protein bS20 family.

Binds directly to 16S ribosomal RNA. The chain is Small ribosomal subunit protein bS20 from Pseudomonas paraeruginosa (strain DSM 24068 / PA7) (Pseudomonas aeruginosa (strain PA7)).